The sequence spans 174 residues: 5-hydroxymethyl-dUMP N-hydrolase (174 aa).

The residue at position 2 (Ala2) is an N-acetylalanine. Gly27 is a binding site for 5-hydroxymethyl-dUMP. The residue at position 28 (Ser28) is a Phosphoserine. 5-hydroxymethyl-dUMP contacts are provided by Ile29, Arg30, Gly31, Ser98, Gly100, and Glu104. At Ser98 the chain carries Phosphoserine. 4 positions are modified to phosphoserine: Ser123, Ser128, Ser138, and Ser169. Ser128 provides a ligand contact to 5-hydroxymethyl-dUMP.

Belongs to the 2'-deoxynucleoside 5'-phosphate N-hydrolase 1 family. Monomer and homodimer. Expressed at low levels in brain, colon, lung, peripheral blood leukocytes, placenta, small intestine, and thymus. Expressed at high levels in heart, kidney, liver, skeletal muscle and spleen. Overexpressed in a significant proportion of breast cancers.

Its subcellular location is the cytoplasm. The protein localises to the nucleus. The enzyme catalyses 5-hydroxymethyl-dUMP + H2O = 5-hydroxymethyluracil + 2-deoxy-D-ribose 5-phosphate. Inhibited by AMP and GMP. In terms of biological role, part of a nucleotide salvage pathway that eliminates epigenetically modified 5-hydroxymethyl-dCMP (hmdCMP) in a two-step process entailing deamination to cytotoxic 5-hydroxymethyl-dUMP (hmdUMP), followed by its hydrolysis into 5-hydroxymethyluracil (hmU) and 2-deoxy-D-ribose 5-phosphate (deoxyribosephosphate). Catalyzes the second step in that pathway, the hydrolysis of the N-glycosidic bond in hmdUMP, degrading this cytotoxic nucleotide to avoid its genomic integration. This Homo sapiens (Human) protein is 5-hydroxymethyl-dUMP N-hydrolase.